The sequence spans 145 residues: RNA polymerase I-specific transcription initiation factor RRN10 (145 aa).

As to quaternary structure, component of the UAF (upstream activation factor) complex which consists of UAF30, RRN5, RRN9, RRN10, and histones H3 and H4.

The protein resides in the nucleus. The protein localises to the nucleolus. Functionally, component of the UAF (upstream activation factor) complex which interacts with the upstream element of the RNA polymerase I promoter and forms a stable preinitiation complex. Together with SPT15/TBP UAF seems to stimulate basal transcription to a fully activated level. This is RNA polymerase I-specific transcription initiation factor RRN10 (RRN10) from Saccharomyces cerevisiae (strain ATCC 204508 / S288c) (Baker's yeast).